We begin with the raw amino-acid sequence, 1243 residues long: DNA polymerase II large subunit (1243 aa).

This sequence belongs to the archaeal DNA polymerase II family. As to quaternary structure, heterodimer of a large subunit and a small subunit.

It catalyses the reaction DNA(n) + a 2'-deoxyribonucleoside 5'-triphosphate = DNA(n+1) + diphosphate. The catalysed reaction is Exonucleolytic cleavage in the 3'- to 5'-direction to yield nucleoside 5'-phosphates.. Its function is as follows. Possesses two activities: a DNA synthesis (polymerase) and an exonucleolytic activity that degrades single-stranded DNA in the 3'- to 5'-direction. Has a template-primer preference which is characteristic of a replicative DNA polymerase. This is DNA polymerase II large subunit from Nanoarchaeum equitans (strain Kin4-M).